Here is a 404-residue protein sequence, read N- to C-terminus: S-adenosylmethionine synthase (404 aa).

An ATP-binding site is contributed by histidine 18. Residue aspartate 20 participates in Mg(2+) binding. Residue glutamate 46 participates in K(+) binding. 2 residues coordinate L-methionine: glutamate 59 and glutamine 102. Residues 102–112 are flexible loop; the sequence is QSPEIAQGVDH. Residues 178-180, 249-250, aspartate 258, 264-265, alanine 281, and lysine 285 contribute to the ATP site; these read DGK, KF, and RK. Aspartate 258 lines the L-methionine pocket. L-methionine is bound at residue lysine 289.

Belongs to the AdoMet synthase family. As to quaternary structure, homotetramer; dimer of dimers. It depends on Mg(2+) as a cofactor. K(+) is required as a cofactor.

Its subcellular location is the cytoplasm. The catalysed reaction is L-methionine + ATP + H2O = S-adenosyl-L-methionine + phosphate + diphosphate. It functions in the pathway amino-acid biosynthesis; S-adenosyl-L-methionine biosynthesis; S-adenosyl-L-methionine from L-methionine: step 1/1. Its function is as follows. Catalyzes the formation of S-adenosylmethionine (AdoMet) from methionine and ATP. The overall synthetic reaction is composed of two sequential steps, AdoMet formation and the subsequent tripolyphosphate hydrolysis which occurs prior to release of AdoMet from the enzyme. This chain is S-adenosylmethionine synthase, found in Rhodococcus jostii (strain RHA1).